Reading from the N-terminus, the 570-residue chain is Interleukin-1 receptor accessory protein (570 aa).

The first 20 residues, 1–20 (MGLLWYLMSLSFYGILQSHA), serve as a signal peptide directing secretion. Ig-like C2-type domains follow at residues 21 to 128 (SERC…VAFP), 139 to 230 (NSAM…RTVT), and 243 to 348 (PQIY…AKVK). The Extracellular portion of the chain corresponds to 21 to 367 (SERCDDWGLD…VELACGFGAT (347 aa)). Disulfide bonds link cysteine 24–cysteine 122, cysteine 47–cysteine 114, cysteine 137–cysteine 181, cysteine 160–cysteine 212, and cysteine 266–cysteine 332. N-linked (GlcNAc...) asparagine glycosylation is present at asparagine 57. The interval 69-85 (IWYWTRQDRDLEEPINF) is essential for interaction with PTPRD. N-linked (GlcNAc...) asparagine glycosylation is found at asparagine 107, asparagine 111, and asparagine 118. N-linked (GlcNAc...) asparagine glycans are attached at residues asparagine 196, asparagine 209, and asparagine 299. A helical transmembrane segment spans residues 368-388 (VFLVVVLIVVYHVYWLEMVLF). At 389-570 (YRAHFGTDET…GLSYSSLKNV (182 aa)) the chain is on the cytoplasmic side. In terms of domain architecture, TIR spans 403 to 546 (KEYDIYVSYA…RFWKQLQVAM (144 aa)). The active site involves glutamate 482. Residues 550-570 (KSPRWSSNDKQGLSYSSLKNV) form a disordered region. The span at 553-570 (RWSSNDKQGLSYSSLKNV) shows a compositional bias: polar residues.

The protein belongs to the interleukin-1 receptor family. The interleukin-36 receptor complex is a heterodimer of IL1RL2 and IL1RAP; the association is inhibited by IL36RN. The interleukin-1 receptor complex is a heterodimer of IL1R1 and IL1RAP. Associates with IL1R2 to form a non-signaling interleukin-1 receptor complex. Interacts with IL-33-bound IL1RL1 to form the minimal interleukin-33 signaling complex with a 1:1:1 stoichiometry. Interacts with KIT (independently of stimulation with KITLG/SCF). A mast cell-specific KITLG/SCF-induced interleukin-33 signaling complex contains IL1RL1, IL1RAP, KIT and MYD88. Interacts (via the first immunoglobilin domain) with PTPRD (via the third immunoglobilin domain); induces pre- and postsynaptic differentiation of neurons. In terms of tissue distribution, detected in lung, brain, spleen, thymus and liver. Expressed in brain endothelial cells, astrocytes, microglia and neurons. Isoform 3 is predominantly expressed in brain; expressed in hippocampal neurons.

The protein resides in the cell membrane. Its subcellular location is the secreted. It catalyses the reaction NAD(+) + H2O = ADP-D-ribose + nicotinamide + H(+). In terms of biological role, coreceptor for IL1RL2 in the IL-36 signaling system. Coreceptor with IL1R1 in the IL-1 signaling system. Associates with IL1R1 bound to IL1B to form the high affinity interleukin-1 receptor complex which mediates interleukin-1-dependent activation of NF-kappa-B and other pathways. Signaling involves the recruitment of adapter molecules such as TOLLIP, MYD88, and IRAK1 or IRAK2 via the respective TIR domains of the receptor/coreceptor subunits. Recruits TOLLIP to the signaling complex. Does not bind to interleukin-1 alone; binding of IL1RN to IL1R1, prevents its association with IL1R1 to form a signaling complex. The cellular response is modulated through a non-signaling association with the membrane IL1R2 decoy receptor. Secreted forms (isoforms 2 and 3) associate with secreted ligand-bound IL1R2 and increase the affinity of secreted IL1R2 for IL1B; this complex formation may be the dominant mechanism for neutralization of IL1B by secreted/soluble receptors. Coreceptor for IL1RL1 in the IL-33 signaling system. Can bidirectionally induce pre- and postsynaptic differentiation of neurons by trans-synaptically binding to PTPRD. May play a role in IL1B-mediated costimulation of IFNG production from T-helper 1 (Th1) cells. Functionally, associates with secreted ligand-bound IL1R2 and increases the affinity of secreted IL1R2 for IL1B; this complex formation may be the dominant mechanism for neutralization of IL1B by secreted/soluble receptors. Enhances the ability of secreted IL1R1 to inhibit IL-33 signaling. Its function is as follows. Required for Src phosphorylation by IL1B. Required for IL1B-potentiated NMDA-induced calcium influx in neurons acting in cooperation with IL1R1 isoform 2 to mediate Akt kinase activation. This Mus musculus (Mouse) protein is Interleukin-1 receptor accessory protein (Il1rap).